A 596-amino-acid polypeptide reads, in one-letter code: Probable tripeptidyl-peptidase SED2 (596 aa).

Residues 1–16 form the signal peptide; sequence MRLLKFVCLLASVAAA. Residues 17–203 constitute a propeptide, removed in mature form; the sequence is KPTPGASHKV…LESMSVEEFA (187 aa). Positions 210 to 596 constitute a Peptidase S53 domain; sequence LVTTACLREL…NFQALTKVLP (387 aa). Asn-265 carries N-linked (GlcNAc...) asparagine glycosylation. Active-site charge relay system residues include Glu-286 and Asp-290. N-linked (GlcNAc...) asparagine glycosylation occurs at Asn-403. Ser-501 functions as the Charge relay system in the catalytic mechanism. Asp-543 and Ile-544 together coordinate Ca(2+). Asn-572 is a glycosylation site (N-linked (GlcNAc...) asparagine). Residues Gly-576 and Asp-578 each coordinate Ca(2+).

Requires Ca(2+) as cofactor.

The protein resides in the secreted. It is found in the extracellular space. It catalyses the reaction Release of an N-terminal tripeptide from a polypeptide.. Its function is as follows. Secreted tripeptidyl-peptidase which degrades proteins at acidic pHs and is involved in virulence. This Trichophyton verrucosum (strain HKI 0517) protein is Probable tripeptidyl-peptidase SED2 (SED2).